The chain runs to 588 residues: Adenine deaminase (588 aa).

It belongs to the metallo-dependent hydrolases superfamily. Adenine deaminase family. The cofactor is Mn(2+).

The catalysed reaction is adenine + H2O + H(+) = hypoxanthine + NH4(+). The polypeptide is Adenine deaminase (Desulforamulus reducens (strain ATCC BAA-1160 / DSM 100696 / MI-1) (Desulfotomaculum reducens)).